The chain runs to 404 residues: Argininosuccinate synthase (404 aa).

Residue Ala-15–Ser-23 coordinates ATP. Tyr-94 contributes to the L-citrulline binding site. Residue Gly-124 participates in ATP binding. The L-aspartate site is built by Thr-126, Asn-130, and Asp-131. Asn-130 serves as a coordination point for L-citrulline. 4 residues coordinate L-citrulline: Arg-134, Ser-182, Glu-266, and Tyr-278.

Belongs to the argininosuccinate synthase family. Type 1 subfamily. As to quaternary structure, homotetramer.

It is found in the cytoplasm. The enzyme catalyses L-citrulline + L-aspartate + ATP = 2-(N(omega)-L-arginino)succinate + AMP + diphosphate + H(+). Its pathway is amino-acid biosynthesis; L-arginine biosynthesis; L-arginine from L-ornithine and carbamoyl phosphate: step 2/3. The protein is Argininosuccinate synthase of Streptomyces avermitilis (strain ATCC 31267 / DSM 46492 / JCM 5070 / NBRC 14893 / NCIMB 12804 / NRRL 8165 / MA-4680).